The following is a 988-amino-acid chain: MIKNREIEVAPPRRTIQFGGYTFVEPDLNFKAPIFSCCGSIRDPSCEEREEEYIDNGHDEEPPVEVNRIQESTSFDEPVSSPPRYRPSENPGPSSSSYEPGHYSFNEYQQFPSRPQKRLVDPPIVDLDEEPPIVDLDDSFDNFHVGSTSEEVVSGDIAPEEEEEEGHDSFDDFESVPAQPPSKNTLASLQKSDSEIALNQQRHDMHGRFRGFLQDDSEEFSDEVGLLGADMNKELYDTLKSKFGFNQFRHRQKQCILSTLMGHDTFVLMPTGAGKSLCYQLPAVILPGVTVVVSPLRSLIEDQKMKMKELGIGCEALTADLGAPAQEKIYAELGSGNPSIKLLYVTPEKISASGRLNSVFFDLHRRGLLARFVIDEAHCVSQWGHDFRPDYTKLSSLREKYANPPVPIIALTATATPKIVTDARDHLKMQNSKLFISSFVRDNLKYDLIPKAARSLINVVEKMKQLYPGKSGIVYCLSRKECETVQMMLTKAGLSAEVYHAGLNDNLRVSVQRSWIANKFDVICATIAFGMGIDKPDVRFVIHYSLPKSIEGYYQETGRAGRDGMPSYCLMLYSYHDSIRLRRMIEEGNTTTGVRSMHLNNVLQVVAYCENVSVCRRKMLVEHFGEVYDEQSCRNSKTPCDICERQRKNAEAIRLFDVSTDALSILKCLPRMQKATLKYISELYRGALIKKSQEQAMRLGHTKLPFYSKGQGMSEQDALRFVRKLVIEGYIHERLYSVPNQAAAVFAYAELTEAGRDLANGKKTAKVYLHIVTCERKRKNAGLIELSNMNIVSEAQALKERHMVKHGDVFTRCLQDLTHLITAVAESSGLSGPYSIVSREGIEQIAALLPRTNSDLLRIDSMTQIKVTKYGRLIMELLATYWKQVDEREEEEMRNQLDKLKSGEIVMGGFATLQSDPGFPSVPYMKPLGGGGGCRGRGKKRAFSGFSSGRATKKPRATAPSARGKTSGRGGAKPATSLKRNMYPATSM.

A disordered region spans residues 46–119; that stretch reads CEEREEEYID…QFPSRPQKRL (74 aa). 2 consecutive repeat copies span residues 121 to 129 and 130 to 138. Positions 121–138 are 2 X 9 AA tandem repeats of [DE]-P-P-I-V-D-L-D-[ED]; the sequence is DPPIVDLDEEPPIVDLDD. Positions 148-185 are disordered; the sequence is TSEEVVSGDIAPEEEEEEGHDSFDDFESVPAQPPSKNT. The span at 158–174 shows a compositional bias: acidic residues; it reads APEEEEEEGHDSFDDFE. ATP contacts are provided by residues 248-252 and 272-276; these read FRHRQ and GAGKS. The Helicase ATP-binding domain maps to 256–433; that stretch reads ILSTLMGHDT…RDHLKMQNSK (178 aa). The DEAH box signature appears at 375–378; sequence DEAH. Positions 458 to 603 constitute a Helicase C-terminal domain; that stretch reads NVVEKMKQLY…VRSMHLNNVL (146 aa). The interval 478 to 480 is 3' overhang DNA-binding; that stretch reads SRK. Position 562 (arginine 562) interacts with ATP. Positions 580–583 are 3' overhang DNA-binding; sequence RLRR. Residues cysteine 615, cysteine 633, cysteine 640, and cysteine 643 each coordinate Zn(2+). 3 3' overhang DNA-binding regions span residues 676-678, 687-691, and 736-742; these read TLK, ALIKK, and YSVPNQA. The region spanning 807-888 is the HRDC domain; that stretch reads GDVFTRCLQD…ATYWKQVDER (82 aa). The tract at residues 930–988 is disordered; sequence GGGGCRGRGKKRAFSGFSSGRATKKPRATAPSARGKTSGRGGAKPATSLKRNMYPATSM. The short motif at 939–955 is the Nuclear localization signal element; sequence KKRAFSGFSSGRATKKP.

This sequence belongs to the helicase family. RecQ subfamily. In terms of assembly, monomer. Homodimer (via N-terminus). Homotetramer (via N-terminus); dimer of dimers. Homohexamer (via N-terminus). Self-association negatively regulates DNA unwinding amplitude and rate. Oligomer forms dissociate into monomer in presence of ATP. Component of the BTR double Holliday Junction dissolution complex composed of at least him-6, top-3, rmh-1 and rmif-2, which is involved in double strand break repair in the germline. May interact with rmh-1; the interaction is required for mutual stability and localization at nuclear foci. Forms a complex composed of cdc-48.1, him-6 and crp-1; within the complex, interacts with cdc-48.1. The cofactor is Zn(2+).

The protein localises to the nucleus. It localises to the chromosome. The catalysed reaction is Couples ATP hydrolysis with the unwinding of duplex DNA by translocating in the 3'-5' direction.. The enzyme catalyses ATP + H2O = ADP + phosphate + H(+). Component of the BTR double Holliday Junction dissolution complex, which is involved in homologous recombination during meiotic double strand break in the germline. Stabilizes and positively regulates the localization of the BTR double Holliday Junction dissolution complex component rmh-1 at nuclear foci during meiotic recombination. Participates in DNA replication and repair. Exhibits a magnesium-dependent ATP-dependent DNA-helicase activity that unwinds single- and double-stranded DNA in a 3'-5' direction. Negatively regulates sister chromatid exchange (SCE). In terms of biological role, ATP-dependent DNA helicase that unwinds single- and double-stranded DNA in a 3'-5' direction. Participates in DNA replication and repair. Negatively regulates sister chromatid exchange (SCE). Stimulates DNA 4-way junction branch migration and DNA Holliday junction dissolution. Binds single-stranded DNA (ssDNA), forked duplex DNA and DNA Holliday junction. This chain is RecQ-like DNA helicase blm-1, found in Caenorhabditis elegans.